The sequence spans 374 residues: Lipopolysaccharide glucosyltransferase WaaG (374 aa).

UDP-alpha-D-glucose is bound by residues Gly-15 and Asp-19. A membrane-interacting region region spans residues 103-132 (YAEKVAQEKGFLYRLTSRYRHYAAFERATF). The UDP-alpha-D-glucose site is built by Arg-173, Arg-208, Lys-209, Arg-261, Glu-281, Ala-283, Gly-284, Ile-285, Val-286, and Glu-289.

Belongs to the glycosyltransferase group 1 family. Glycosyltransferase 4 subfamily.

It localises to the cell inner membrane. It participates in bacterial outer membrane biogenesis; LPS core biosynthesis. Its activity is regulated as follows. Inhibited by divalent metal ions such as Mg(2+), Mn(2+), Ca(2+), Zn(2+), Co(2+), Ni(2+) and Cu(2+). Its function is as follows. Glucosyltransferase involved in the biosynthesis of the core oligosaccharide region of lipopolysaccharide (LPS). Catalyzes the addition of the first outer-core glucose from UDP-glucose to the inner-core heptose II. Cannot use other sugar donors, such as UDP-galactose, UDP-glucuronic acid, UDP-galacuronic acid, GDP-mannose, ADP-glucose and GDP-glucose. In the absence of a lipid acceptor, can slowly hydrolyze UDP-glucose. The polypeptide is Lipopolysaccharide glucosyltransferase WaaG (Escherichia coli (strain K12)).